The sequence spans 612 residues: UPF0329 protein ECU05_1680/ECU11_0050 (612 aa).

The segment covering 304-330 (RQRREMEKKEEEKKKEEEKKKEEEKRK) has biased composition (basic and acidic residues). Positions 304–424 (RQRREMEKKE…RKRYKIHRRV (121 aa)) are disordered. A compositionally biased stretch (basic residues) spans 331–349 (EEKKKKKEEKKEEKKKKKE). Residues 350–388 (EKKEEKKEEKKEEKKEEKKEEKKEEKKEEKSGKSLREGE) are compositionally biased toward basic and acidic residues.

The protein belongs to the UPF0329 family.

The sequence is that of UPF0329 protein ECU05_1680/ECU11_0050 from Encephalitozoon cuniculi (strain GB-M1) (Microsporidian parasite).